A 359-amino-acid polypeptide reads, in one-letter code: Peptide chain release factor 1 (359 aa).

Gln-235 carries the post-translational modification N5-methylglutamine. Residues 280 to 306 (AERQRADSERSADRKSQVGSGDRSERI) are disordered.

The protein belongs to the prokaryotic/mitochondrial release factor family. Methylated by PrmC. Methylation increases the termination efficiency of RF1.

It localises to the cytoplasm. Peptide chain release factor 1 directs the termination of translation in response to the peptide chain termination codons UAG and UAA. The polypeptide is Peptide chain release factor 1 (Rhizobium leguminosarum bv. trifolii (strain WSM2304)).